The following is a 382-amino-acid chain: Alkaline serine protease ver112 (382 aa).

An N-terminal signal peptide occupies residues 1–15 (MRLSIIAAVLPLALA). Positions 16–102 (APVAEPEIAP…IEQDAIFSIN (87 aa)) are excised as a propeptide. One can recognise an Inhibitor I9 domain in the interval 56–99 (SKIPGIERVYENVLNGFSATLSNEELERLRRDPDVESIEQDAIF). The Peptidase S8 domain occupies 111 to 382 (TWGLTRISHR…VNYLAFNGAT (272 aa)). Intrachain disulfides connect Cys-138–Cys-227 and Cys-282–Cys-353. Active-site charge relay system residues include Asp-143, His-173, and Ser-328.

It belongs to the peptidase S8 family.

The protein resides in the secreted. Inhibited by phenylmethylsulfonyl fluoride (PMSF). Functionally, serine protease which can degrade the nematode cuticle. This chain is Alkaline serine protease ver112, found in Corniculantispora psalliotae (Lecanicillium psalliotae).